The chain runs to 672 residues: tRNA(Met) cytidine acetyltransferase TmcA (672 aa).

ATP is bound by residues Gln-180, 202-211, and Arg-319; that span reads GRGKSALAGQ. The N-acetyltransferase domain occupies 349–531; that stretch reads IEISAFYQQA…SGCYTAMALL (183 aa). Acetyl-CoA contacts are provided by residues 461–463, 468–474, and Arg-506; these read IAV and QREGIGQ.

The protein belongs to the RNA cytidine acetyltransferase family. TmcA subfamily.

It localises to the cytoplasm. The enzyme catalyses cytidine(34) in elongator tRNA(Met) + acetyl-CoA + ATP + H2O = N(4)-acetylcytidine(34) in elongator tRNA(Met) + ADP + phosphate + CoA + H(+). Catalyzes the formation of N(4)-acetylcytidine (ac(4)C) at the wobble position of tRNA(Met), by using acetyl-CoA as an acetyl donor and ATP (or GTP). The protein is tRNA(Met) cytidine acetyltransferase TmcA of Salmonella typhimurium (strain LT2 / SGSC1412 / ATCC 700720).